Consider the following 274-residue polypeptide: Transcriptional activator PerA (274 aa).

Residues Asp168–Val265 form the HTH araC/xylS-type domain. 2 DNA-binding regions (H-T-H motif) span residues Gly185 to Asn206 and Ile232 to Tyr255.

Its function is as follows. Could help in the transcriptional activator of eaeA expression in enteropathogenic E.coli. However, it seems that it is PerC which acts as an activator. In Escherichia coli O127:H6 (strain E2348/69 / EPEC), this protein is Transcriptional activator PerA (perA).